A 218-amino-acid polypeptide reads, in one-letter code: N-(5'-phosphoribosyl)anthranilate isomerase (218 aa).

It belongs to the TrpF family.

It catalyses the reaction N-(5-phospho-beta-D-ribosyl)anthranilate = 1-(2-carboxyphenylamino)-1-deoxy-D-ribulose 5-phosphate. It participates in amino-acid biosynthesis; L-tryptophan biosynthesis; L-tryptophan from chorismate: step 3/5. The sequence is that of N-(5'-phosphoribosyl)anthranilate isomerase from Acetivibrio thermocellus (strain ATCC 27405 / DSM 1237 / JCM 9322 / NBRC 103400 / NCIMB 10682 / NRRL B-4536 / VPI 7372) (Clostridium thermocellum).